The following is a 390-amino-acid chain: Precorrin-6Y C(5,15)-methyltransferase [decarboxylating] (390 aa).

This sequence belongs to the precorrin methyltransferase family.

The catalysed reaction is precorrin-6B + 2 S-adenosyl-L-methionine = precorrin-8X + 2 S-adenosyl-L-homocysteine + CO2 + 3 H(+). It functions in the pathway cofactor biosynthesis; adenosylcobalamin biosynthesis; cob(II)yrinate a,c-diamide from precorrin-2 (aerobic route): step 7/10. Functionally, catalyzes the methylation of both C-5 and C-15 in precorrin-6Y to form precorrin-8X. In Mycobacterium tuberculosis (strain ATCC 25618 / H37Rv), this protein is Precorrin-6Y C(5,15)-methyltransferase [decarboxylating] (cobL).